We begin with the raw amino-acid sequence, 251 residues long: MSLATLETRLGHHFGDQALLEQALTHRSHGARHNERLEFLGDSVLNFVVAAMLFERYAKLDEGDLSRVRANLVKQASLADIAQRLELSPYLRLGEGEMKSGGFRRPSILADAVEALFGAVFLDAGFDAARKVIEQQYVPVLANVDPETLGKDAKTLLQEFLQGRKLALPLYTVVATHGAAHSQQFEVECAIPALEIKVTAAGASRRAAEQSAAKLALEAALVVSPRATRKGGRARKTAQLSLPVAVAQEVK.

Positions 3–125 (LATLETRLGH…LFGAVFLDAG (123 aa)) constitute an RNase III domain. E38 is a Mg(2+) binding site. D42 is a catalytic residue. Mg(2+) contacts are provided by D111 and E114. E114 is a catalytic residue. Residues 152-222 (DAKTLLQEFL…AKLALEAALV (71 aa)) form the DRBM domain.

It belongs to the ribonuclease III family. Homodimer. The cofactor is Mg(2+).

The protein resides in the cytoplasm. It catalyses the reaction Endonucleolytic cleavage to 5'-phosphomonoester.. Functionally, digests double-stranded RNA. Involved in the processing of primary rRNA transcript to yield the immediate precursors to the large and small rRNAs (23S and 16S). Processes some mRNAs, and tRNAs when they are encoded in the rRNA operon. Processes pre-crRNA and tracrRNA of type II CRISPR loci if present in the organism. This is Ribonuclease 3 from Bordetella avium (strain 197N).